Here is a 267-residue protein sequence, read N- to C-terminus: 2-keto-3-deoxy-L-rhamnonate aldolase (267 aa).

Residue His49 is the Proton acceptor of the active site. Gln151 provides a ligand contact to substrate. Mg(2+) is bound at residue Glu153. Substrate contacts are provided by Ala178 and Asp179. Asp179 is a binding site for Mg(2+).

The protein belongs to the HpcH/HpaI aldolase family. KDR aldolase subfamily. In terms of assembly, homohexamer. It depends on Mg(2+) as a cofactor.

It carries out the reaction 2-dehydro-3-deoxy-L-rhamnonate = (S)-lactaldehyde + pyruvate. Its function is as follows. Catalyzes the reversible retro-aldol cleavage of 2-keto-3-deoxy-L-rhamnonate (KDR) to pyruvate and lactaldehyde. This is 2-keto-3-deoxy-L-rhamnonate aldolase from Shigella boydii serotype 4 (strain Sb227).